A 176-amino-acid polypeptide reads, in one-letter code: ADP-ribosylation factor-like protein 11 (176 aa).

The N-myristoyl glycine moiety is linked to residue G2. GTP contacts are provided by residues 19–26 (GLDSAGKT), 63–67 (DIGGQ), and 122–125 (NKQE).

The protein belongs to the small GTPase superfamily. Arf family.

Its function is as follows. May play a role in apoptosis. May act as a tumor suppressor. This is ADP-ribosylation factor-like protein 11 (Arl11) from Mus musculus (Mouse).